The sequence spans 390 residues: Small ribosomal subunit protein uS9m (390 aa).

Residues 368 to 390 (PRIRERKKPGQEGARRKFTWKKR) form a disordered region.

It belongs to the universal ribosomal protein uS9 family. In terms of assembly, component of the mitochondrial ribosome small subunit (28S) which comprises a 12S rRNA and about 30 distinct proteins.

The protein localises to the mitochondrion. This Mus musculus (Mouse) protein is Small ribosomal subunit protein uS9m (Mrps9).